The sequence spans 364 residues: MSEENINKNEFPELKNDTFLKACRGEEVPYVPVWIMRQAGRYLPEFKSVRADVDFFSVCRTPELACKVTLQPLDRFPLDAAIIFSDILVVPQAMGIEVQMIPGKGPFFPNPIRTIEDLSRVQFPVDVNKELGYVFDALTLTRKRLEGRVPLIGFTGAPWTLMTYCIEGSGGTTMSNSKSWLYKHPAESHKFLSMLTRVCIDYLLGQIKAGAQALQIFDSWSNELSPAMFKEYCLPYLVQIGKEVKAVHPEIPLICFAKGSNFALEDLSKSGAYDVLGIDWTIEPSVAREMVADRVSLQGNLDPCVLYCGDQVIRDQTQKMLQSFGTTKRLIANLGHGMHPTHPIEGPESYVKAVHELSKQMINK.

Residues 37-41 (RQAGR), Phe55, Ser85, Asp86, Tyr164, Ser219, and His336 contribute to the substrate site.

Belongs to the uroporphyrinogen decarboxylase family. In terms of assembly, homodimer.

Its subcellular location is the cytoplasm. It catalyses the reaction uroporphyrinogen III + 4 H(+) = coproporphyrinogen III + 4 CO2. It functions in the pathway porphyrin-containing compound metabolism; protoporphyrin-IX biosynthesis; coproporphyrinogen-III from 5-aminolevulinate: step 4/4. Catalyzes the decarboxylation of four acetate groups of uroporphyrinogen-III to yield coproporphyrinogen-III. This is Uroporphyrinogen decarboxylase (hemE) from Dictyostelium discoideum (Social amoeba).